The primary structure comprises 762 residues: Protein PHTF1 (762 aa).

In terms of domain architecture, PHTF spans 6-150 (RDAISWYQKK…VHCQIVSTQI (145 aa)). 3 helical membrane passes run 77–97 (GLVR…VTSL), 99–119 (IFVW…LYLM), and 121–141 (PIVN…MGTV). The interval 152 to 184 (RPSGNNGNRRRRKLRKTVNGDGSRENGNNSSDK) is disordered. N-linked (GlcNAc...) asparagine glycosylation is found at Asn-179 and Asn-180. Phosphoserine is present on residues Ser-272, Ser-276, Ser-277, Ser-334, and Ser-336. Disordered stretches follow at residues 344–380 (SAAF…ETED) and 393–415 (RSSV…TKRD). Low complexity predominate over residues 348–361 (SQGSRSGVSGGSRS). Asn-363 carries N-linked (GlcNAc...) asparagine glycosylation. Basic and acidic residues predominate over residues 365–376 (SRRDSESTRHDS). Residue Asn-431 is glycosylated (N-linked (GlcNAc...) asparagine). Transmembrane regions (helical) follow at residues 473 to 493 (GVGY…FPFL), 512 to 532 (EILT…LSII), 611 to 631 (VVVS…CAQV), and 645 to 665 (WEFL…ASLG). Residues Asn-674 and Asn-733 are each glycosylated (N-linked (GlcNAc...) asparagine). The helical transmembrane segment at 737–757 (VVILSAVSGVISDLLGFNIRL) threads the bilayer.

Interacts with FEM1B. As to expression, widely expressed with highest levels in testis.

The protein resides in the endoplasmic reticulum membrane. The protein localises to the golgi apparatus. It is found in the cis-Golgi network membrane. The protein is Protein PHTF1 of Homo sapiens (Human).